A 202-amino-acid chain; its full sequence is CASP-like protein 2B1 (202 aa).

Residues 1–29 (MSYLGVGVSPGNVPVYHGTNSKVIDRRVR) are Cytoplasmic-facing. The helical transmembrane segment at 30–50 (LAELVLRCVICCLGVLAAVLV) threads the bilayer. Residues 51-72 (GTDTQVKEIFSIQKKARFTDMK) lie on the Extracellular side of the membrane. Residues 73 to 93 (ALVFLVAANGIAAAYSFVQGV) traverse the membrane as a helical segment. The Cytoplasmic segment spans residues 94–109 (RCVVGMVKGSVLFSKP). A helical membrane pass occupies residues 110–132 (LAWVIFSGDQMMAYLTMSAVAAA). Over 133-164 (AQSSVFAKLGQPDLQWMKICTMYGKFCNQVGE) the chain is Extracellular. The chain crosses the membrane as a helical span at residues 165-185 (GIASALLVSVSMVVLSCISAF). Residues 186–202 (SLFRLYGGNKGKDGARW) lie on the Cytoplasmic side of the membrane.

This sequence belongs to the Casparian strip membrane proteins (CASP) family. In terms of assembly, homodimer and heterodimers.

The protein resides in the cell membrane. This Populus trichocarpa (Western balsam poplar) protein is CASP-like protein 2B1.